A 61-amino-acid polypeptide reads, in one-letter code: Large ribosomal subunit protein uL30 (61 aa).

It belongs to the universal ribosomal protein uL30 family. As to quaternary structure, part of the 50S ribosomal subunit.

The protein is Large ribosomal subunit protein uL30 of Parafrankia sp. (strain EAN1pec).